The following is a 430-amino-acid chain: Adenylosuccinate synthetase (430 aa).

Residues 13 to 19 (GDEGKGK) and 41 to 43 (GHT) each bind GTP. Asp14 acts as the Proton acceptor in catalysis. Residues Asp14 and Gly41 each contribute to the Mg(2+) site. IMP is bound by residues 14-17 (DEGK), 39-42 (NAGH), Thr130, Arg144, Gln225, Thr240, and Arg304. Residue His42 is the Proton donor of the active site. Position 300–306 (300–306 (ATTGRKR)) interacts with substrate. GTP is bound by residues Arg306, 332–334 (KLD), and 414–416 (STG).

Belongs to the adenylosuccinate synthetase family. As to quaternary structure, homodimer. It depends on Mg(2+) as a cofactor.

It is found in the cytoplasm. The enzyme catalyses IMP + L-aspartate + GTP = N(6)-(1,2-dicarboxyethyl)-AMP + GDP + phosphate + 2 H(+). It participates in purine metabolism; AMP biosynthesis via de novo pathway; AMP from IMP: step 1/2. Plays an important role in the de novo pathway of purine nucleotide biosynthesis. Catalyzes the first committed step in the biosynthesis of AMP from IMP. The sequence is that of Adenylosuccinate synthetase from Teredinibacter turnerae (strain ATCC 39867 / T7901).